Here is a 30-residue protein sequence, read N- to C-terminus: Fimbrial assembly protein, serogroup B1 (30 aa).

This Dichelobacter nodosus (Bacteroides nodosus) protein is Fimbrial assembly protein, serogroup B1 (fimB).